The sequence spans 453 residues: MSAIFAERALLPEGWARNVRFEISADGVLAEIRPDANADGAERLGGAVLPGMPNLHSHAFQRAMAGLAEVAGNPNDSFWTWRELMYRMVARLSPEQIEVIACQLYIEMLKAGYTAVAEFHYVHHDLDGRSYADPAELSLRISRAASAAGIGLTLLPVLYSHAGFGGQPASEGQRRFINGSEAYLELLQRLRAPLEAAGHSLGLCFHSLRAVTPQQIATVLAAGHDDLPVHIHIAEQQKEVDDCQAWSGRRPLQWLYENVAVDQRWCLVHATHADPAEVAAMARSGAVAGLCLSTEANLGDGIFPATDFLAQGGRLGIGSDSHVSLSVVEELRWLEYGQRLRDRKRNRLYRDDQPMIGRTLYDAALAGGAQALGQPIGSLAVGRRADLLVLDGNDPYLASAEGDALLNRWLFAGGDRQVRDVMVAGRWVVRDGRHAGEERSARAFVQVLGELLD.

His-56 and His-58 together coordinate Zn(2+). N-formimidoyl-L-glutamate-binding residues include Gln-61, Arg-82, Tyr-121, His-206, and Arg-209. Zn(2+) is bound at residue His-232. Glu-235 lines the N-formimidoyl-L-glutamate pocket. Residues His-269 and Asp-320 each act as proton acceptor in the active site. Asp-320 contacts Zn(2+).

This sequence belongs to the metallo-dependent hydrolases superfamily. In terms of assembly, homodimer. Zn(2+) serves as cofactor.

The catalysed reaction is N-formimidoyl-L-glutamate + H2O = N-formyl-L-glutamate + NH4(+). It participates in amino-acid degradation; L-histidine degradation into L-glutamate; L-glutamate from N-formimidoyl-L-glutamate (deiminase route): step 1/2. With respect to regulation, inhibited by the metal chelator dipicolinate. Inhibited by N-formimino-L-aspartate and N-guanidino-L-glutaric acid. Catalyzes the hydrolysis of N-formimino-L-glutamate to N-formyl-L-glutamate and ammonia. The chain is Formimidoylglutamate deiminase from Pseudomonas aeruginosa (strain ATCC 15692 / DSM 22644 / CIP 104116 / JCM 14847 / LMG 12228 / 1C / PRS 101 / PAO1).